A 209-amino-acid chain; its full sequence is ATP phosphoribosyltransferase (209 aa).

Belongs to the ATP phosphoribosyltransferase family. Short subfamily. In terms of assembly, heteromultimer composed of HisG and HisZ subunits.

It localises to the cytoplasm. The catalysed reaction is 1-(5-phospho-beta-D-ribosyl)-ATP + diphosphate = 5-phospho-alpha-D-ribose 1-diphosphate + ATP. Its pathway is amino-acid biosynthesis; L-histidine biosynthesis; L-histidine from 5-phospho-alpha-D-ribose 1-diphosphate: step 1/9. Catalyzes the condensation of ATP and 5-phosphoribose 1-diphosphate to form N'-(5'-phosphoribosyl)-ATP (PR-ATP). Has a crucial role in the pathway because the rate of histidine biosynthesis seems to be controlled primarily by regulation of HisG enzymatic activity. The sequence is that of ATP phosphoribosyltransferase from Caldicellulosiruptor saccharolyticus (strain ATCC 43494 / DSM 8903 / Tp8T 6331).